The sequence spans 189 residues: Phosphoheptose isomerase (189 aa).

Residues 34–189 (LADSLAGGRK…CDLVEKRLFP (156 aa)) form the SIS domain. 49-51 (NGG) is a substrate binding site. Residues His58 and Glu62 each coordinate Zn(2+). Substrate is bound by residues Glu62, 91–92 (ND), 117–119 (STS), Ser122, and Gln169. The Zn(2+) site is built by Gln169 and His177.

It belongs to the SIS family. GmhA subfamily. In terms of assembly, homotetramer. Zn(2+) serves as cofactor.

It localises to the cytoplasm. The enzyme catalyses 2 D-sedoheptulose 7-phosphate = D-glycero-alpha-D-manno-heptose 7-phosphate + D-glycero-beta-D-manno-heptose 7-phosphate. The protein operates within carbohydrate biosynthesis; D-glycero-D-manno-heptose 7-phosphate biosynthesis; D-glycero-alpha-D-manno-heptose 7-phosphate and D-glycero-beta-D-manno-heptose 7-phosphate from sedoheptulose 7-phosphate: step 1/1. In terms of biological role, catalyzes the isomerization of sedoheptulose 7-phosphate in D-glycero-D-manno-heptose 7-phosphate. The polypeptide is Phosphoheptose isomerase (Geobacter sulfurreducens (strain ATCC 51573 / DSM 12127 / PCA)).